The following is a 330-amino-acid chain: Beta-ketoacyl-[acyl-carrier-protein] synthase III (330 aa).

Catalysis depends on residues Cys114 and His254. Residues Gln255 to Arg259 are ACP-binding. Asn284 is a catalytic residue.

It belongs to the thiolase-like superfamily. FabH family. As to quaternary structure, homodimer.

Its subcellular location is the cytoplasm. The enzyme catalyses malonyl-[ACP] + acetyl-CoA + H(+) = 3-oxobutanoyl-[ACP] + CO2 + CoA. It participates in lipid metabolism; fatty acid biosynthesis. Its function is as follows. Catalyzes the condensation reaction of fatty acid synthesis by the addition to an acyl acceptor of two carbons from malonyl-ACP. Catalyzes the first condensation reaction which initiates fatty acid synthesis and may therefore play a role in governing the total rate of fatty acid production. Possesses both acetoacetyl-ACP synthase and acetyl transacylase activities. Its substrate specificity determines the biosynthesis of branched-chain and/or straight-chain of fatty acids. In Roseiflexus castenholzii (strain DSM 13941 / HLO8), this protein is Beta-ketoacyl-[acyl-carrier-protein] synthase III.